Here is a 138-residue protein sequence, read N- to C-terminus: Ribosomal RNA large subunit methyltransferase H (138 aa).

S-adenosyl-L-methionine-binding positions include G86 and 105–110; that span reads LSPLTF.

This sequence belongs to the RNA methyltransferase RlmH family. As to quaternary structure, homodimer.

It localises to the cytoplasm. The catalysed reaction is pseudouridine(1915) in 23S rRNA + S-adenosyl-L-methionine = N(3)-methylpseudouridine(1915) in 23S rRNA + S-adenosyl-L-homocysteine + H(+). Specifically methylates the pseudouridine at position 1915 (m3Psi1915) in 23S rRNA. The chain is Ribosomal RNA large subunit methyltransferase H from Prochlorococcus marinus (strain MIT 9215).